The following is a 66-amino-acid chain: Large ribosomal subunit protein bL33c (66 aa).

It belongs to the bacterial ribosomal protein bL33 family.

The protein localises to the plastid. Its subcellular location is the chloroplast. In Saccharum officinarum (Sugarcane), this protein is Large ribosomal subunit protein bL33c.